The chain runs to 474 residues: Glutamate--tRNA ligase (474 aa).

Residues 9–19 (PSPTGYLHVGG) carry the 'HIGH' region motif. The short motif at 240-244 (KLSKR) is the 'KMSKS' region element. Position 243 (K243) interacts with ATP.

Belongs to the class-I aminoacyl-tRNA synthetase family. Glutamate--tRNA ligase type 1 subfamily. In terms of assembly, monomer.

It localises to the cytoplasm. It catalyses the reaction tRNA(Glu) + L-glutamate + ATP = L-glutamyl-tRNA(Glu) + AMP + diphosphate. Catalyzes the attachment of glutamate to tRNA(Glu) in a two-step reaction: glutamate is first activated by ATP to form Glu-AMP and then transferred to the acceptor end of tRNA(Glu). This Vibrio parahaemolyticus serotype O3:K6 (strain RIMD 2210633) protein is Glutamate--tRNA ligase.